Consider the following 238-residue polypeptide: Probable septum site-determining protein MinC (238 aa).

Belongs to the MinC family. In terms of assembly, interacts with MinD and FtsZ.

Functionally, cell division inhibitor that blocks the formation of polar Z ring septums. Rapidly oscillates between the poles of the cell to destabilize FtsZ filaments that have formed before they mature into polar Z rings. Prevents FtsZ polymerization. This is Probable septum site-determining protein MinC from Aeromonas salmonicida (strain A449).